Here is a 121-residue protein sequence, read N- to C-terminus: U15-barytoxin-Tl1a (121 aa).

A signal peptide spans 1–17 (MKLSVIVLVASFGFAVA). Intrachain disulfides connect Cys-56–Cys-74, Cys-67–Cys-80, Cys-71–Cys-119, and Cys-73–Cys-90.

Belongs to the neurotoxin 03 (Tx2) family. 03 subfamily. As to expression, expressed by the venom gland.

It is found in the secreted. Ion channel inhibitor. This Trittame loki (Brush-footed trapdoor spider) protein is U15-barytoxin-Tl1a.